The following is a 69-amino-acid chain: DNA-directed RNA polymerase subunit omega (69 aa).

Belongs to the RNA polymerase subunit omega family. In terms of assembly, the RNAP catalytic core consists of 2 alpha, 1 beta, 1 beta' and 1 omega subunit. When a sigma factor is associated with the core the holoenzyme is formed, which can initiate transcription.

It catalyses the reaction RNA(n) + a ribonucleoside 5'-triphosphate = RNA(n+1) + diphosphate. Its function is as follows. Promotes RNA polymerase assembly. Latches the N- and C-terminal regions of the beta' subunit thereby facilitating its interaction with the beta and alpha subunits. This is DNA-directed RNA polymerase subunit omega from Geotalea uraniireducens (strain Rf4) (Geobacter uraniireducens).